Consider the following 115-residue polypeptide: Immunoglobulin kappa chain variable 12-41 (115 aa).

Positions 1-20 (MSVLTQVLALLLLWLTGARC) are cleaved as a signal peptide. The segment at 21–43 (DIQMTQSPASLSASVGETVTITC) is framework-1. Cysteines 43 and 108 form a disulfide. A complementarity-determining-1 region spans residues 44 to 54 (RASGNIHNYLA). The segment at 55–69 (WYQQKQGKSPQLLVY) is framework-2. Residues 70-76 (NAKTLAD) are complementarity-determining-2. Residues 77 to 108 (GVPSRFSGSGSGTQYSLKINSLQPEDFGSYYC) form a framework-3 region. Positions 109 to 115 (QHFWSTP) are complementarity-determining-3.

The protein is Immunoglobulin kappa chain variable 12-41 of Mus musculus (Mouse).